The chain runs to 305 residues: FMRFamide-related peptides type HF-4 (305 aa).

The N-terminal stretch at 1-19 (MTSLCLTIAPAVLSLICLS) is a signal peptide. Phe-36, Phe-47, and Phe-66 each carry phenylalanine amide. Isoleucine amide is present on Ile-75. A phenylalanine amide mark is found at Phe-84 and Phe-93. Ile-102 bears the Isoleucine amide mark. 7 positions are modified to phenylalanine amide: Phe-111, Phe-120, Phe-129, Phe-138, Phe-147, Phe-156, and Phe-165. A propeptide spanning residues 168-305 (SVDGEIEAGV…EHKQEYMRFG (138 aa)) is cleaved from the precursor.

Belongs to the FARP (FMRFamide related peptide) family. Central nervous system.

It is found in the secreted. Can function as both cardioregulatory hormones and transmitters and may regulate cardiovascular function. This Cornu aspersum (Brown garden snail) protein is FMRFamide-related peptides type HF-4.